Here is a 505-residue protein sequence, read N- to C-terminus: Histidine ammonia-lyase (505 aa).

The 5-imidazolinone (Ala-Gly) cross-link spans 141 to 143 (ASG). S142 bears the 2,3-didehydroalanine (Ser) mark.

This sequence belongs to the PAL/histidase family. Post-translationally, contains an active site 4-methylidene-imidazol-5-one (MIO), which is formed autocatalytically by cyclization and dehydration of residues Ala-Ser-Gly.

It is found in the cytoplasm. It carries out the reaction L-histidine = trans-urocanate + NH4(+). It participates in amino-acid degradation; L-histidine degradation into L-glutamate; N-formimidoyl-L-glutamate from L-histidine: step 1/3. This is Histidine ammonia-lyase from Bacillus thuringiensis (strain Al Hakam).